The sequence spans 492 residues: Bifunctional shikimate kinase/3-dehydroquinate synthase (492 aa).

The shikimate kinase stretch occupies residues 1–161 (MRIFLVGMMG…TALVVLEALD (161 aa)). Residue 10–15 (GSGKST) participates in ATP binding. Position 14 (Ser14) interacts with Mg(2+). The substrate site is built by Asp32, Arg56, and Gly78. Arg114 contributes to the ATP binding site. Arg131 contacts substrate. Residues 162–492 (EKEISTIEKP…DPLELLEVVD (331 aa)) are 3-dehydroquinate synthase.

This sequence in the N-terminal section; belongs to the shikimate kinase family. It in the C-terminal section; belongs to the sugar phosphate cyclases superfamily. Dehydroquinate synthase family. Requires Mg(2+) as cofactor. NAD(+) is required as a cofactor. The cofactor is a divalent metal cation.

The protein resides in the cytoplasm. It catalyses the reaction 7-phospho-2-dehydro-3-deoxy-D-arabino-heptonate = 3-dehydroquinate + phosphate. The enzyme catalyses shikimate + ATP = 3-phosphoshikimate + ADP + H(+). The protein operates within metabolic intermediate biosynthesis; chorismate biosynthesis; chorismate from D-erythrose 4-phosphate and phosphoenolpyruvate: step 2/7. It functions in the pathway metabolic intermediate biosynthesis; chorismate biosynthesis; chorismate from D-erythrose 4-phosphate and phosphoenolpyruvate: step 5/7. In terms of biological role, catalyzes the specific phosphorylation of the 3-hydroxyl group of shikimic acid using ATP as a cosubstrate. This is Bifunctional shikimate kinase/3-dehydroquinate synthase (aroKB) from Thermotoga maritima (strain ATCC 43589 / DSM 3109 / JCM 10099 / NBRC 100826 / MSB8).